Consider the following 363-residue polypeptide: Anhydro-N-acetylmuramic acid kinase (363 aa).

ATP is bound at residue 10–17 (GTSLDGLD).

The protein belongs to the anhydro-N-acetylmuramic acid kinase family.

The catalysed reaction is 1,6-anhydro-N-acetyl-beta-muramate + ATP + H2O = N-acetyl-D-muramate 6-phosphate + ADP + H(+). It functions in the pathway amino-sugar metabolism; 1,6-anhydro-N-acetylmuramate degradation. The protein operates within cell wall biogenesis; peptidoglycan recycling. Catalyzes the specific phosphorylation of 1,6-anhydro-N-acetylmuramic acid (anhMurNAc) with the simultaneous cleavage of the 1,6-anhydro ring, generating MurNAc-6-P. Is required for the utilization of anhMurNAc either imported from the medium or derived from its own cell wall murein, and thus plays a role in cell wall recycling. Contributes to intrinsic fosfomycin resistance in P.putida. The polypeptide is Anhydro-N-acetylmuramic acid kinase (Pseudomonas putida (strain ATCC 47054 / DSM 6125 / CFBP 8728 / NCIMB 11950 / KT2440)).